A 397-amino-acid polypeptide reads, in one-letter code: CCA-adding enzyme (397 aa).

Gly-27 and Arg-30 together coordinate ATP. 2 residues coordinate CTP: Gly-27 and Arg-30. Residues Asp-40 and Asp-42 each contribute to the Mg(2+) site. ATP contacts are provided by Arg-111, Asp-154, Arg-157, Arg-160, and Arg-163. Arg-111, Asp-154, Arg-157, Arg-160, and Arg-163 together coordinate CTP.

It belongs to the tRNA nucleotidyltransferase/poly(A) polymerase family. Bacterial CCA-adding enzyme type 3 subfamily. In terms of assembly, homodimer. The cofactor is Mg(2+).

It catalyses the reaction a tRNA precursor + 2 CTP + ATP = a tRNA with a 3' CCA end + 3 diphosphate. The enzyme catalyses a tRNA with a 3' CCA end + 2 CTP + ATP = a tRNA with a 3' CCACCA end + 3 diphosphate. Catalyzes the addition and repair of the essential 3'-terminal CCA sequence in tRNAs without using a nucleic acid template. Adds these three nucleotides in the order of C, C, and A to the tRNA nucleotide-73, using CTP and ATP as substrates and producing inorganic pyrophosphate. tRNA 3'-terminal CCA addition is required both for tRNA processing and repair. Also involved in tRNA surveillance by mediating tandem CCA addition to generate a CCACCA at the 3' terminus of unstable tRNAs. While stable tRNAs receive only 3'-terminal CCA, unstable tRNAs are marked with CCACCA and rapidly degraded. The chain is CCA-adding enzyme from Bacillus licheniformis (strain ATCC 14580 / DSM 13 / JCM 2505 / CCUG 7422 / NBRC 12200 / NCIMB 9375 / NCTC 10341 / NRRL NRS-1264 / Gibson 46).